We begin with the raw amino-acid sequence, 271 residues long: 4-hydroxy-tetrahydrodipicolinate reductase (271 aa).

8–13 (GITGRM) serves as a coordination point for NAD(+). Position 35 (Arg35) interacts with NADP(+). NAD(+) is bound by residues 100-102 (GST) and 124-127 (APNM). His157 serves as the catalytic Proton donor/acceptor. His158 contributes to the (S)-2,3,4,5-tetrahydrodipicolinate binding site. Residue Lys161 is the Proton donor of the active site. A (S)-2,3,4,5-tetrahydrodipicolinate-binding site is contributed by 167–168 (GT).

This sequence belongs to the DapB family.

It is found in the cytoplasm. It catalyses the reaction (S)-2,3,4,5-tetrahydrodipicolinate + NAD(+) + H2O = (2S,4S)-4-hydroxy-2,3,4,5-tetrahydrodipicolinate + NADH + H(+). The catalysed reaction is (S)-2,3,4,5-tetrahydrodipicolinate + NADP(+) + H2O = (2S,4S)-4-hydroxy-2,3,4,5-tetrahydrodipicolinate + NADPH + H(+). Its pathway is amino-acid biosynthesis; L-lysine biosynthesis via DAP pathway; (S)-tetrahydrodipicolinate from L-aspartate: step 4/4. Functionally, catalyzes the conversion of 4-hydroxy-tetrahydrodipicolinate (HTPA) to tetrahydrodipicolinate. In Myxococcus xanthus (strain DK1622), this protein is 4-hydroxy-tetrahydrodipicolinate reductase.